The sequence spans 512 residues: MEQETFEEQEITVADINANVPQEVQNYLRSFNKAIQEKSLKEIEEHYEYKWRRTTDQYFKDSRWPEPVYIQAMFEQEGQEDSYFVSLYPELYYRDVYYRSSNTNIEITVEDRHASYDHYIELINMFVEPDAPLDLELPNKWLWDMIDEFLYQFQDFVIFRSRVDDAKTESDYQEIAERPNAWNVTIVLNALHSLILKSEINEQLEAYRSGQNPTEMAGAFGKSSLYKMLGCFSLVGLVRLQCHLGDYRQALQIMKNVDLDRRFIFSLVPACNVSLHYHLGFCYLMLRRYQDAFRLFESILIQMASHRGPGHYDGGRKRDTIVCLLALAYSLLPQRLERSVEHLMNEKEGENIRKIQSGEGADEAINHLLLRGAPRFLCPFLADPQQPPEEDVLKAESERQLELFKQEAKQLILLGQIRSYLKLYTRMKLEKLAKFLELTVPQLRSMLHSFKHKMSQIVHTPGGEPLAGERQFTDSVDFYVDGDEICIATMTVKKSYGDDFLTASLKMVTSNR.

In terms of domain architecture, PCI spans D291–D477.

Belongs to the eIF-3 subunit L family. As to quaternary structure, component of the eukaryotic translation initiation factor 3 (eIF-3) complex.

The protein resides in the cytoplasm. Component of the eukaryotic translation initiation factor 3 (eIF-3) complex, which is involved in protein synthesis of a specialized repertoire of mRNAs and, together with other initiation factors, stimulates binding of mRNA and methionyl-tRNAi to the 40S ribosome. The eIF-3 complex specifically targets and initiates translation of a subset of mRNAs involved in cell proliferation. This is Eukaryotic translation initiation factor 3 subunit L from Monosiga brevicollis (Choanoflagellate).